A 376-amino-acid chain; its full sequence is Homeobox protein extradenticle (376 aa).

The segment at 16-35 (APQGYSLSGQDDGQNTGNEN) is disordered. Over residues 20 to 34 (YSLSGQDDGQNTGNE) the composition is skewed to polar residues. The 200-residue stretch at 38–237 (RKQKDIGEIL…VMILRSRFLD (200 aa)) folds into the PBC domain. Residues 45-124 (EILQQIMSIS…EGVAGPEKGG (80 aa)) form a PBC-A region. Residues 127 to 237 (AAAASAAAAS…VMILRSRFLD (111 aa)) form a PBC-B region. The segment at residues 238-300 (ARRKRRNFSK…NKRIRYKKNI (63 aa)) is a DNA-binding region (homeobox; TALE-type). The span at 318-335 (ASPYSMAGPPSGTTTPMM) shows a compositional bias: low complexity. Residues 318-376 (ASPYSMAGPPSGTTTPMMSPAPPQDSMGYTMGSGGYDQQQPYDNSMGGYDPNLHQDLSP) are disordered.

This sequence belongs to the TALE/PBX homeobox family. As to quaternary structure, interacts with Ubx and hth.

It localises to the nucleus. In terms of biological role, transcription factor which acts with the selector homeodomain proteins altering the regulation of downstream target genes such as wingless (wg), teashirt (tsh) and decapentaplegic (dpp), thus affecting segmental identity. Delimits the eye field and prevent inappropriate eye development. Required for proper localization of chordotonal organs within the peripheral nervous system. The chain is Homeobox protein extradenticle from Drosophila pseudoobscura pseudoobscura (Fruit fly).